A 145-amino-acid chain; its full sequence is Transcriptional regulator MraZ (145 aa).

SpoVT-AbrB domains follow at residues 5 to 50 and 81 to 124; these read TFNH…ALPQ and AHEV…DRAA.

The protein belongs to the MraZ family. In terms of assembly, forms oligomers.

It is found in the cytoplasm. The protein resides in the nucleoid. The polypeptide is Transcriptional regulator MraZ (Anaeromyxobacter dehalogenans (strain 2CP-1 / ATCC BAA-258)).